The sequence spans 286 residues: Protein NipSnap homolog 2 (286 aa).

Residues M1–P40 constitute a mitochondrion transit peptide.

Belongs to the NipSnap family.

Its subcellular location is the mitochondrion matrix. Protein involved in mitophagy. Accumulates on the mitochondria surface in response to mitochondrial depolarization and acts as a 'eat me' signal by recruiting proteins involved in selective autophagy. This is Protein NipSnap homolog 2 (nipsnap2) from Danio rerio (Zebrafish).